The primary structure comprises 319 residues: uncharacterized protein (319 aa).

Positions 1-27 (MYKKFVPFAVFLFLFFVSFEMMENPHA) are cleaved as a signal peptide. Residues 130–306 (PMVAFLINVA…QIKDKGYALG (177 aa)) enclose the NodB homology domain.

This sequence belongs to the polysaccharide deacetylase family.

This is an uncharacterized protein from Bacillus subtilis (strain 168).